Reading from the N-terminus, the 2541-residue chain is MVALSLKISIGNVVKTMQFEPSTMVYDACRMIRERIPEALAGPPNDFGLFLSDDDPKKGIWLEAGKALDYYMLRNGDTMEYRKKQRPLKIRMLDGTVKTIMVDDSKTVTDMLMTICARIGITNHDEYSLVRELMEEKKDEGTGTLRKDKTLLRDEKKMEKLKQKLHTDDELNWLDHGRTLREQGVEEHETLLLRRKFFYSDQNVDSRDPVQLNLLYVQARDDILNGSHPVSFDKACEFAGFQCQIQFGPHNEQKHKAGFLDLKDFLPKEYVKQKGERKIFQAHKNCGQMSEIEAKVRYVKLARSLKTYGVSFFLVKEKMKGKNKLVPRLLGITKECVMRVDEKTKEVIQEWSLTNIKRWAASPKSFTLDFGDYQDGYYSVQTTEGEQIAQLIAGYIDIILKKKKSKDHFGLEGDEESTMLEDSVSPKKSTVLQQQYNRVGKVEHGSVALPAIMRSGASGPENFQVGSMPPAQQQITSGQMHRGHMPPLTSAQQALTGTINSSMQAVQAAQATLDDFETLPPLGQDAASKAWRKNKMDESKHEIHSQVDAITAGTASVVNLTAGDPAETDYTAVGCAVTTISSNLTEMSRGVKLLAALLEDEGGNGRPLLQAAKGLAGAVSELLRSAQPASAEPRQNLLQAAGNVGQASGELLQQIGESDTDPHFQDVLMQLAKAVASAAAALVLKAKSVAQRTEDSGLQTQVIAAATQCALSTSQLVACTKVVAPTISSPVCQEQLVEAGRLVAKAVEGCVSASQAATEDGQLLRGVGAAATAVTQALNELLQHVKAHATGAGPAGRYDQATDTILTVTENIFSSMGDAGEMVRQARILAQATSDLVNAIKADAEGESDLENSRKLLSAAKILADATAKMVEAAKGAAAHPDSEEQQQRLREAAEGLRMATNAAAQNAIKKKLVQRLEHAAKQAAASATQTIAAAQHAASAPKASAGPQPLLVQSCKAVAEQIPLLVQGVRGSQAQPDSPSAQLALIAASQSFLQPGGKMVAAAKASVPTIQDQASAMQLSQCAKNLGTALAELRTAAQKAQEACGPLEMDSALSVVQNLEKDLQEIKAAARDGKLKPLPGETMEKCTQDLGNSTKAVSSAIAKLLGEIAQGNENYAGIAARDVAGGLRSLAQAARGVAALTSDPAVQAIVLDTASDVLDKASSLIEEAKKASGHPGDPESQQRLAQVAKAVTQALNRCVSCLPGQRDVDNALRAVGDASKRLLSDSLPPSTGTFQEAQSRLNEAAAGLNQAATELVQASRGTPQDLARASGRFGQDFSTFLEAGVEMAGQAPSQEDRAQVVSNLKGISMSSSKLLLAAKALSTDPASPNLKSQLAAAARAVTDSINQLITMCTQQAPGQKECDNALRQLETVRELLENPVQPINDMSYFGCLDSVMENSKVLGEAMTGISQNAKNGNLPEFGDAIATASKALCGFTEAAAQAAYLVGVSDPNSQAGQQGLVEPTQFARANQAIQMACQSLGEPGCTQAQVLSAATIVAKHTSALCNSCRLASARTANPTAKRQFVQSAKEVANSTANLVKTIKALDGDFTEENRAQCRAATAPLLEAVDNLSAFASNPEFSSVPAQISPEGRAAMEPIVISAKTMLESAGGLIQTARALAVNPRDPPRWSVLAGHSRTVSDSIKKLITSMRDKAPGQLECETAIAALNSCLRDLDQASLAAVSQQLAPREGISQEALHTQMLTAVQEISHLIEPLASAARAEASQLGHKVSQMAQYFEPLTLAAVGAASKTLSHPQQMALLDQTKTLAESALQLLYTAKEAGGNPKQAAHTQEALEEAVQMMTEAVEDLTTTLNEAASAAGVVGGMVDSITQAINQLDEGPMGDPEGSFVDYQTTMVRTAKAIAVTVQEMVTKSNTSPEELGPLANQLTSDYGRLASQAKPAAVAAENEEIGAHIKHRVQELGHGCSALVTKAGALQCSPSDVYTKKELIECARRVSEKVSHVLAALQAGNRGTQACITAASAVSGIIADLDTTIMFATAGTLNREGAETFADHREGILKTAKVLVEDTKVLVQNAAGSQEKLAQAAQSSVATITRLADVVKLGAASLGAEDPETQVVLINAVKDVAKALGDLISATKAAAGKVGDDPAVWQLKNSAKVMVTNVTSLLKTVKAVEDEATKGTRALEATTEHIRQELAVFCSPEPPAKTSTPEDFIRMTKGITMATAKAVAAGNSCRQEDVIATANLSRRAIADMLRACKEAAFHPEVAPDVRLRALHYGRECANGYLELLDHVLLTLQKPNPDLKQQLTGHSKRVAGSVTELIQAAEAMKGTEWVDPEDPTVIAENELLGAAAAIEAAAKKLEQLKPRAKPKEADESLNFEEQILEAAKSIAAATSALVKAASAAQRELVAQGKVGAIPANALDDGQWSQGLISAARMVAAATNNLCEAANAAVQGHASQEKLISSAKQVAASTAQLLVACKVKADQDSEAMKRLQAAGNAVKRASDNLVKAAQKAAAFEDQENETVVVKEKMVGGIAQIIAAQEEMLRKERELEEARKKLAQIRQQQYKFLPSELRDEH.

One can recognise an FERM domain in the interval 86–403 (RPLKIRMLDG…GYIDIILKKK (318 aa)). Thr-167 carries the phosphothreonine modification. Positions 280-435 (FQAHKNCGQM…PKKSTVLQQQ (156 aa)) are interaction with LAYN. Phosphoserine is present on residues Ser-405, Ser-425, Ser-446, Ser-620, and Ser-729. The interval 482 to 655 (RGHMPPLTSA…QASGELLQQI (174 aa)) is helical bundle R1. The tract at residues 656–786 (GESDTDPHFQ…ALNELLQHVK (131 aa)) is helical bundle R2. The helical bundle R3 stretch occupies residues 787 to 911 (AHATGAGPAG…NAAAQNAIKK (125 aa)). The helical bundle R4 stretch occupies residues 913–1044 (LVQRLEHAAK…RTAAQKAQEA (132 aa)). Ser-1021 carries the post-translational modification Phosphoserine. Residues 1046 to 1206 (GPLEMDSALS…NRCVSCLPGQ (161 aa)) are helical bundle R5. Tyr-1116 carries the phosphotyrosine modification. Thr-1142 carries the post-translational modification Phosphothreonine. Ser-1201 and Ser-1225 each carry phosphoserine. Residues 1207 to 1357 (RDVDNALRAV…QLITMCTQQA (151 aa)) are helical bundle R6. The residue at position 1263 (Thr-1263) is a Phosphothreonine. 2 positions are modified to phosphoserine: Ser-1323 and Ser-1328. Residues 1327 to 1948 (ASPNLKSQLA…CSPSDVYTKK (622 aa)) form an interaction with SYNM region. The segment at 1358 to 1453 (PGQKECDNAL…AYLVGVSDPN (96 aa)) is helical bundle R7A; Interaction with KANK1. Positions 1359-1659 (GQKECDNALR…SMRDKAPGQL (301 aa)) are interaction with VCL and F-actin. The helical bundle R8 stretch occupies residues 1461–1580 (LVEPTQFARA…NLSAFASNPE (120 aa)). N6-acetyllysine is present on Lys-1544. The interval 1581 to 1653 (FSSVPAQISP…IKKLITSMRD (73 aa)) is helical bundle R7B; Interaction with KANK1. The tract at residues 1655–1822 (APGQLECETA…TLNEAASAAG (168 aa)) is helical bundle R9. A helical bundle R10 region spans residues 1823 to 1973 (VVGGMVDSIT…VLAALQAGNR (151 aa)). Phosphoserine is present on Ser-1849. A Phosphothreonine modification is found at Thr-1855. Ser-1878 bears the Phosphoserine mark. The tract at residues 1974–2140 (GTQACITAAS…TVKAVEDEAT (167 aa)) is helical bundle R11. Lys-2031 carries the post-translational modification N6-acetyllysine. Ser-2040 is subject to Phosphoserine. Position 2115 is an N6-acetyllysine (Lys-2115). Positions 2141 to 2294 (KGTRALEATT…QAAEAMKGTE (154 aa)) are helical bundle R12. In terms of domain architecture, I/LWEQ spans 2293–2533 (TEWVDPEDPT…QIRQQQYKFL (241 aa)). Positions 2300 to 2482 (DPTVIAENEL…AAQKAAAFED (183 aa)) are helical bundle R13.

Part of a complex composed of THSD1, PTK2/FAK1, TLN1 and VCL. Interacts with THSD1; this promotes interaction with PTK2/FAK1 and VCL. Interacts with NRAP and LAYN. Interacts with SYNM. Interacts with ITGB1; the interaction is prevented by competitive binding of ITGB1BP1. Binds with high affinity to VCL and with low affinity to integrins. Interacts with APBB1IP; this inhibits VCL binding. Interacts with PTK2/FAK1. Interacts with PIP5K1C. Interacts with F-actin. Interacts with SVEP1. Interacts (via R7 domain) with KANK1 or KANK2 (via KN motif); this interaction likely initiates the assembly of cortical microtubule stabilization complexes (CMSCs) at the vicinity of focal adhesions.

The protein resides in the cell projection. Its subcellular location is the ruffle membrane. It is found in the cytoplasm. It localises to the cytoskeleton. The protein localises to the cell surface. The protein resides in the cell junction. Its subcellular location is the focal adhesion. Its function is as follows. High molecular weight cytoskeletal protein concentrated at regions of cell-matrix and cell-cell contacts. Involved in connections of major cytoskeletal structures to the plasma membrane. With KANK1 co-organize the assembly of cortical microtubule stabilizing complexes (CMSCs) positioned to control microtubule-actin crosstalk at focal adhesions (FAs) rims. This Mus musculus (Mouse) protein is Talin-1 (Tln1).